The following is a 348-amino-acid chain: Probable dual-specificity RNA methyltransferase RlmN (348 aa).

Catalysis depends on Glu90, which acts as the Proton acceptor. Residues 96–324 enclose the Radical SAM core domain; sequence AAERLTVCVS…ASVRHTRGLE (229 aa). Cysteines 103 and 329 form a disulfide. [4Fe-4S] cluster is bound by residues Cys110, Cys114, and Cys117. S-adenosyl-L-methionine contacts are provided by residues 157 to 158, Ser187, 210 to 212, and Asn286; these read GE and SLH. The active-site S-methylcysteine intermediate is the Cys329.

The protein belongs to the radical SAM superfamily. RlmN family. Requires [4Fe-4S] cluster as cofactor.

It is found in the cytoplasm. The catalysed reaction is adenosine(2503) in 23S rRNA + 2 reduced [2Fe-2S]-[ferredoxin] + 2 S-adenosyl-L-methionine = 2-methyladenosine(2503) in 23S rRNA + 5'-deoxyadenosine + L-methionine + 2 oxidized [2Fe-2S]-[ferredoxin] + S-adenosyl-L-homocysteine. It catalyses the reaction adenosine(37) in tRNA + 2 reduced [2Fe-2S]-[ferredoxin] + 2 S-adenosyl-L-methionine = 2-methyladenosine(37) in tRNA + 5'-deoxyadenosine + L-methionine + 2 oxidized [2Fe-2S]-[ferredoxin] + S-adenosyl-L-homocysteine. Functionally, specifically methylates position 2 of adenine 2503 in 23S rRNA and position 2 of adenine 37 in tRNAs. The chain is Probable dual-specificity RNA methyltransferase RlmN from Gloeobacter violaceus (strain ATCC 29082 / PCC 7421).